A 275-amino-acid chain; its full sequence is Large ribosomal subunit protein uL2 (275 aa).

Positions 35–49 are enriched in polar residues; the sequence is DSQSSTAGRNNNGRI. 2 disordered regions span residues 35–59 and 224–275; these read DSQS…GGHK and AMNP…RHKR. Over residues 50–59 the composition is skewed to basic residues; that stretch reads TTRHKGGGHK.

It belongs to the universal ribosomal protein uL2 family. Part of the 50S ribosomal subunit. Forms a bridge to the 30S subunit in the 70S ribosome.

One of the primary rRNA binding proteins. Required for association of the 30S and 50S subunits to form the 70S ribosome, for tRNA binding and peptide bond formation. It has been suggested to have peptidyltransferase activity; this is somewhat controversial. Makes several contacts with the 16S rRNA in the 70S ribosome. This is Large ribosomal subunit protein uL2 from Burkholderia orbicola (strain AU 1054).